We begin with the raw amino-acid sequence, 203 residues long: Protein GrpE (203 aa).

Belongs to the GrpE family. Homodimer.

It is found in the cytoplasm. Its function is as follows. Participates actively in the response to hyperosmotic and heat shock by preventing the aggregation of stress-denatured proteins, in association with DnaK and GrpE. It is the nucleotide exchange factor for DnaK and may function as a thermosensor. Unfolded proteins bind initially to DnaJ; upon interaction with the DnaJ-bound protein, DnaK hydrolyzes its bound ATP, resulting in the formation of a stable complex. GrpE releases ADP from DnaK; ATP binding to DnaK triggers the release of the substrate protein, thus completing the reaction cycle. Several rounds of ATP-dependent interactions between DnaJ, DnaK and GrpE are required for fully efficient folding. The sequence is that of Protein GrpE from Pseudoalteromonas translucida (strain TAC 125).